Reading from the N-terminus, the 20-residue chain is Unknown protein NF040 from 2D-PAGE (20 aa).

Residues 1–20 form the TCTP domain; that stretch reads MKVYTDIFTRDEFLSDSYPM.

The protein belongs to the TCTP family.

The polypeptide is Unknown protein NF040 from 2D-PAGE (Naegleria fowleri (Brain eating amoeba)).